The sequence spans 1098 residues: Tudor domain-containing protein 7 (1098 aa).

2 HTH OST-type domains span residues 3 to 76 (EGDL…YAMA) and 233 to 302 (KMDE…YPAK). Ser319 carries the post-translational modification Phosphoserine. Residues 337-406 (MAGDFKEKVA…PQKAILYAKL (70 aa)) enclose the HTH OST-type 3 domain. Tudor domains follow at residues 513-570 (AVNV…FCSL) and 703-760 (LPFC…FLQE). A Phosphoserine modification is found at Ser859. The interval 861-1098 (NSKNGNMRVS…EYLIELSKVN (238 aa)) is interaction with CDK17. An interaction with CABLES1 region spans residues 893–1098 (TSSFSTEELP…EYLIELSKVN (206 aa)).

This sequence belongs to the TDRD7 family. As to quaternary structure, found in a mRNP complex, at least composed of TDRD1, TDRD6, TDRD7 and DDX4. Found in a complex containing CABLES1, CDK16 and CDK17. Interacts with CABLES1, CDK17 and PIWIL1.

Its subcellular location is the cytoplasm. Functionally, component of specific cytoplasmic RNA granules involved in post-transcriptional regulation of specific genes: probably acts by binding to specific mRNAs and regulating their translation. Required for lens transparency during lens development, by regulating translation of genes such as CRYBB3 and HSPB1 in the developing lens. Also required during spermatogenesis. This is Tudor domain-containing protein 7 (TDRD7) from Pongo abelii (Sumatran orangutan).